The primary structure comprises 235 residues: Peptidase E (235 aa).

Residues serine 122, aspartate 137, and histidine 159 each act as charge relay system in the active site.

It belongs to the peptidase S51 family.

It is found in the cytoplasm. The catalysed reaction is Dipeptidase E catalyzes the hydrolysis of dipeptides Asp-|-Xaa. It does not act on peptides with N-terminal Glu, Asn or Gln, nor does it cleave isoaspartyl peptides.. Its function is as follows. Hydrolyzes dipeptides containing N-terminal aspartate residues. May play a role in allowing the cell to use peptide aspartate to spare carbon otherwise required for the synthesis of the aspartate family of amino acids. This chain is Peptidase E, found in Shewanella amazonensis (strain ATCC BAA-1098 / SB2B).